Consider the following 501-residue polypeptide: Bifunctional purine biosynthesis protein PurH (501 aa).

Residues 1–144 (MKKRALISVF…KNFKDVVVLS (144 aa)) enclose the MGS-like domain.

Belongs to the PurH family.

It catalyses the reaction (6R)-10-formyltetrahydrofolate + 5-amino-1-(5-phospho-beta-D-ribosyl)imidazole-4-carboxamide = 5-formamido-1-(5-phospho-D-ribosyl)imidazole-4-carboxamide + (6S)-5,6,7,8-tetrahydrofolate. It carries out the reaction IMP + H2O = 5-formamido-1-(5-phospho-D-ribosyl)imidazole-4-carboxamide. The protein operates within purine metabolism; IMP biosynthesis via de novo pathway; 5-formamido-1-(5-phospho-D-ribosyl)imidazole-4-carboxamide from 5-amino-1-(5-phospho-D-ribosyl)imidazole-4-carboxamide (10-formyl THF route): step 1/1. It functions in the pathway purine metabolism; IMP biosynthesis via de novo pathway; IMP from 5-formamido-1-(5-phospho-D-ribosyl)imidazole-4-carboxamide: step 1/1. The sequence is that of Bifunctional purine biosynthesis protein PurH from Clostridium perfringens (strain SM101 / Type A).